Consider the following 1383-residue polypeptide: WD repeat-containing protein dyf-2 (1383 aa).

5 WD repeats span residues 32-71, 72-112, 118-157, 160-198, and 337-376; these read EHGS…IDAL, NPTG…TDTV, SSKE…RIAV, KHQR…VSTT, and ETEK…LAAS. TPR repeat units follow at residues 756 to 789, 810 to 847, 885 to 918, 940 to 973, 996 to 1029, 1031 to 1053, and 1064 to 1097; these read EEKN…MEAL, PKEI…NPQN, RVVK…DRAA, PKIH…DNQV, IEGA…QEAF, LAEK…NISQ, and VNDM…ENCV.

As to quaternary structure, component of the IFT complex A (IFT-A) composed of at least che-11, daf-10, dyf-2, ift-139, ift-43 and ifta-1. As to expression, expressed in ciliated sensory neurons.

The protein localises to the cell projection. The protein resides in the cilium. Component of the IFT complex A (IFT-A), a complex required for retrograde ciliary transport. Moves along the ciliary axoneme and is involved in the assembly, localization and the movement of other intraflagellar transport (IFT) proteins along the cilia axoneme. May also associate with the BBSome complex in order to mediate ciliary transport. Regulates cilia biogenesis, morphology and sensitivity to environmental cues. The chain is WD repeat-containing protein dyf-2 from Caenorhabditis elegans.